Reading from the N-terminus, the 558-residue chain is NAD(P)H-quinone oxidoreductase chain 4 (558 aa).

The next 15 helical transmembrane spans lie at 25-45, 56-76, 90-110, 111-131, 133-153, 157-177, 189-209, 230-250, 264-284, 298-318, 327-347, 353-373, 397-417, 438-458, and 485-505; these read FPWL…VPFV, WFAL…YLTG, VSWL…LSMP, LILL…PVTF, PKLF…VFAV, LLFF…LAIW, FILY…AMGF, GFEL…LPIV, TAPV…YALM, FAPL…LTSF, IAYS…SFSE, AMLQ…LVGA, FALW…SGFV, IVID…LLSM, and VYII…PKLM.

This sequence belongs to the complex I subunit 4 family.

It is found in the cellular thylakoid membrane. The enzyme catalyses a plastoquinone + NADH + (n+1) H(+)(in) = a plastoquinol + NAD(+) + n H(+)(out). It carries out the reaction a plastoquinone + NADPH + (n+1) H(+)(in) = a plastoquinol + NADP(+) + n H(+)(out). NDH-1 shuttles electrons from NAD(P)H, via FMN and iron-sulfur (Fe-S) centers, to quinones in the respiratory chain. The immediate electron acceptor for the enzyme in this species is believed to be plastoquinone. Couples the redox reaction to proton translocation (for every two electrons transferred, four hydrogen ions are translocated across the cytoplasmic membrane), and thus conserves the redox energy in a proton gradient. This Synechococcus sp. (strain CC9311) protein is NAD(P)H-quinone oxidoreductase chain 4.